Reading from the N-terminus, the 770-residue chain is Integrin beta-2 (770 aa).

The N-terminal stretch at 1-22 (MLPQRPQLLLLAGLLSLQSVLS) is a signal peptide. Q23 carries the pyrrolidone carboxylic acid modification. The Extracellular segment spans residues 23–701 (QECTKYKVST…DMLECVKGPN (679 aa)). Residues 24–74 (ECTKYKVSTCRDCIESGPSCAWCQKLNFTGQGEPDSTRCDTRAQLLSKGCP) enclose the PSI domain. Disulfide bonds link C25–C43, C33–C447, C36–C62, C46–C73, C191–C198, C246–C286, C386–C400, C420–C445, C449–C467, C459–C470, C472–C481, C483–C514, C497–C512, C506–C517, C519–C534, C536–C559, C541–C557, C549–C562, C564–C573, C575–C598, C582–C596, C590–C601, C603–C612, C615–C618, C622–C663, C628–C647, C631–C643, and C671–C696. N-linked (GlcNAc...) asparagine glycans are attached at residues N50 and N116. A VWFA domain is found at 124–363 (GYPIDLYYLM…ELIKSAYNKL (240 aa)). Mg(2+) is bound by residues S136 and S138. Ca(2+)-binding residues include S138, D141, D142, and D173. Ca(2+)-binding residues include N229, D231, P233, and E234. Position 234 (E234) interacts with Mg(2+). N-linked (GlcNAc...) asparagine glycosylation is present at N254. Ca(2+) contacts are provided by D264 and E347. Residues 397 to 399 (RGD) carry the Cell attachment site motif. 4 consecutive I-EGF domains span residues 449-482 (CREA…KNCE), 483-535 (CQTH…QFCE), 536-574 (CDNV…SACQ), and 575-613 (CLKS…PLCI). N501 carries N-linked (GlcNAc...) asparagine glycosylation. A glycan (N-linked (GlcNAc...) asparagine) is linked at N642. Residues 702–724 (IAAIVGGTVGGVVLVGILLLAIW) traverse the membrane as a helical segment. Over 725–770 (KALTHLSDLREYHRFEKEKLKSQWNNDNPLFKSATTTVMNPKFAES) the chain is Cytoplasmic. 2 positions are modified to phosphoserine: S746 and S757. Residues T759 and T761 each carry the phosphothreonine modification.

The protein belongs to the integrin beta chain family. In terms of assembly, heterodimer of an alpha and a beta subunit. The ITGB2 beta subunit associates with the ITGAL, ITGAM, ITGAX or ITGAD alpha subunits. Found in a complex with CD177 and ITGAM/CD11b. Interacts with FGR. Interacts with COPS5 and RANBP9. Interacts with FLNA (via filamin repeats 4, 9, 12, 17, 19, 21, and 23). Interacts with THBD. In terms of processing, both Ser-746 and Ser-757 become phosphorylated when T-cells are exposed to phorbol esters. Phosphorylation on Thr-759 (but not on Ser-757) allows interaction with 14-3-3 proteins.

It localises to the cell membrane. Its subcellular location is the membrane raft. In terms of biological role, integrin ITGAL/ITGB2 is a receptor for ICAM1, ICAM2, ICAM3 and ICAM4. Integrin ITGAL/ITGB2 is also a receptor for the secreted form of ubiquitin-like protein ISG15; the interaction is mediated by ITGAL. Integrins ITGAM/ITGB2 and ITGAX/ITGB2 are receptors for the iC3b fragment of the third complement component and for fibrinogen. Integrin ITGAX/ITGB2 recognizes the sequence G-P-R in fibrinogen alpha-chain. Integrin ITGAM/ITGB2 recognizes P1 and P2 peptides of fibrinogen gamma chain. Integrin ITGAM/ITGB2 is also a receptor for factor X. Integrin ITGAD/ITGB2 is a receptor for ICAM3 and VCAM1. Contributes to natural killer cell cytotoxicity. Involved in leukocyte adhesion and transmigration of leukocytes including T-cells and neutrophils. Triggers neutrophil transmigration during lung injury through PTK2B/PYK2-mediated activation. Integrin ITGAL/ITGB2 in association with ICAM3, contributes to apoptotic neutrophil phagocytosis by macrophages. In association with alpha subunit ITGAM/CD11b, required for CD177-PRTN3-mediated activation of TNF primed neutrophils. This chain is Integrin beta-2 (ITGB2), found in Ovis canadensis (Bighorn sheep).